Reading from the N-terminus, the 95-residue chain is Neutrophil antibiotic peptide NP-5 (95 aa).

The N-terminal stretch at 1-19 is a signal peptide; sequence MRTLALLAAILLVTLQAQA. A propeptide spanning residues 20–62 is cleaved from the precursor; the sequence is ELHSGMADDGVDQQQPRAQDLDVAVYIKQDETSPLEVLGAKAG. 3 disulfides stabilise this stretch: Cys-65-Cys-93, Cys-67-Cys-82, and Cys-72-Cys-92.

The protein belongs to the alpha-defensin family.

The protein localises to the secreted. Functionally, microbicidal activity. This chain is Neutrophil antibiotic peptide NP-5, found in Oryctolagus cuniculus (Rabbit).